A 239-amino-acid chain; its full sequence is 7-cyano-7-deazaguanine synthase (239 aa).

Residue 8-18 coordinates ATP; it reads FSGGLDSTACL. Residues cysteine 194, cysteine 209, cysteine 212, and cysteine 215 each coordinate Zn(2+).

The protein belongs to the QueC family. Zn(2+) serves as cofactor.

It carries out the reaction 7-carboxy-7-deazaguanine + NH4(+) + ATP = 7-cyano-7-deazaguanine + ADP + phosphate + H2O + H(+). The protein operates within purine metabolism; 7-cyano-7-deazaguanine biosynthesis. Catalyzes the ATP-dependent conversion of 7-carboxy-7-deazaguanine (CDG) to 7-cyano-7-deazaguanine (preQ(0)). In Pyrococcus horikoshii (strain ATCC 700860 / DSM 12428 / JCM 9974 / NBRC 100139 / OT-3), this protein is 7-cyano-7-deazaguanine synthase.